The chain runs to 849 residues: MESGPRVEPGPGAPAAVLARIPQEPRPSPEGDPSPPPPPTPMSALVPDTPPDTPPAMKNASTPQQLPLEPVSPTGQVSPQPAPPPDECPSSEAKSRGPTPTATGPRDAKPSQRSSQPSPTAVPASDSPSAKQDVKKAGERHKLAKERREERAKYLAAKKAVWLEKEEKAKALREKQLQERRRRLEEQRLKAEQRRAALEERQRQKLEKNKERYEAAIQRSVKKTWAEIRQQRWSWAGALHHNSPGRKTSGSRCSVSAVNLPKHVDSIINKRLSKSSATLWNSPSRNRSLQLSAWESSIVDRLMTPTLSFLARSRSAVTLPRNGRDQGRGSGPGRRPTRARAGASLAPGPHPDRTHPSAAVPVCPRSASASPLTPCSAPRSAHRCTPSGERPERRKPGAGGSPALVRRRLEATPVQKKEKKDKERENEKEKSALARERNLKKRQSLPASIRPRISTGAELSTKSKARPTSPSTTWHRPASPCPSPGPGHTLPPKPPSPRGTTASPKGRIRRKEEAKESPSPSGPEDKNHSKSRTAEEKEPAAPASPAPSPVPSPTPAQPQKEQSSTQIPPDTAVPAVPTVPTFPTAPPTAAPSVTPSKPMAGTTDREEATRLLAEKRRQAREQREREEQERKLQAERDKRMREEQLAREAEARAEREAEARRREEQEAREKAQAEQEEQERLQKQKEEAEARSREEAERQRLEREKHFQKEEQERQERRKRLEEIMKRTRKSEAAETKKQDGKETMANNSGPDPVKAVETRPSGLQKDSMQKEELAPQEPQWSLPSKEMPGSLVNGLQPLPAHQENGFPAKGTAGDKSLGRAAEGLLPFAEADAFLKKAVVQPPQVTEVL.

Disordered regions lie at residues 1 to 151 and 186 to 210; these read MESG…REER and EQRL…EKNK. The segment covering 24 to 41 has biased composition (pro residues); that stretch reads EPRPSPEGDPSPPPPPTP. Phosphothreonine occurs at positions 49 and 53. Phosphoserine occurs at positions 72 and 95. Thr-99 carries the phosphothreonine modification. Ser-115 and Ser-118 each carry phosphoserine. At Thr-120 the chain carries Phosphothreonine. Phosphoserine is present on residues Ser-125 and Ser-127. Positions 132–151 are enriched in basic and acidic residues; sequence QDVKKAGERHKLAKERREER. The stretch at 167-223 forms a coiled coil; that stretch reads EKAKALREKQLQERRRRLEEQRLKAEQRRAALEERQRQKLEKNKERYEAAIQRSVKK. 5 positions are modified to phosphoserine: Ser-256, Ser-275, Ser-315, Ser-368, and Ser-401. Residues 318-815 are disordered; that stretch reads TLPRNGRDQG…GFPAKGTAGD (498 aa). The span at 407–437 shows a compositional bias: basic and acidic residues; the sequence is RRLEATPVQKKEKKDKERENEKEKSALARER. Residues Ser-444, Ser-448, Ser-454, and Ser-460 each carry the phosphoserine modification. A compositionally biased stretch (polar residues) spans 457–474; that stretch reads AELSTKSKARPTSPSTTW. Lys-462 participates in a covalent cross-link: Glycyl lysine isopeptide (Lys-Gly) (interchain with G-Cter in SUMO2). Ser-479 and Ser-496 each carry phosphoserine. The segment covering 479 to 497 has biased composition (pro residues); the sequence is SPCPSPGPGHTLPPKPPSP. Basic and acidic residues predominate over residues 523-539; it reads PEDKNHSKSRTAEEKEP. Residues 542 to 556 are compositionally biased toward pro residues; sequence PASPAPSPVPSPTPA. Phosphoserine occurs at positions 544, 548, and 552. Residue Thr-554 is modified to Phosphothreonine. Residues 568–582 are compositionally biased toward low complexity; that stretch reads PPDTAVPAVPTVPTF. Positions 602 to 724 form a coiled coil; that stretch reads TTDREEATRL…QERRKRLEEI (123 aa). The span at 603–743 shows a compositional bias: basic and acidic residues; the sequence is TDREEATRLL…AETKKQDGKE (141 aa).

The protein belongs to the MAP7 family.

It localises to the cytoplasm. It is found in the cytoskeleton. Its subcellular location is the spindle. The protein localises to the microtubule organizing center. The protein resides in the centrosome. It localises to the midbody. Microtubule-stabilizing protein involved in the control of cell motility and neurite outgrowth. Facilitate microtubule stabilization through the maintenance of acetylated stable microtubules. The chain is MAP7 domain-containing protein 1 (Map7d1) from Rattus norvegicus (Rat).